The following is a 647-amino-acid chain: DNA ligase (647 aa).

NAD(+) is bound by residues 30–34, 79–80, and glutamate 105; these read DEEYD and SM. Lysine 107 (N6-AMP-lysine intermediate) is an active-site residue. Positions 128, 162, and 301 each coordinate NAD(+). The Zn(2+) site is built by cysteine 395, cysteine 398, cysteine 411, and cysteine 416. A BRCT domain is found at 570–647; it reads KSDGVIFGKT…ESAFNELVKE (78 aa).

The protein belongs to the NAD-dependent DNA ligase family. LigA subfamily. Requires Mg(2+) as cofactor. Mn(2+) serves as cofactor.

It catalyses the reaction NAD(+) + (deoxyribonucleotide)n-3'-hydroxyl + 5'-phospho-(deoxyribonucleotide)m = (deoxyribonucleotide)n+m + AMP + beta-nicotinamide D-nucleotide.. Its function is as follows. DNA ligase that catalyzes the formation of phosphodiester linkages between 5'-phosphoryl and 3'-hydroxyl groups in double-stranded DNA using NAD as a coenzyme and as the energy source for the reaction. It is essential for DNA replication and repair of damaged DNA. This Campylobacter jejuni subsp. jejuni serotype O:23/36 (strain 81-176) protein is DNA ligase.